The sequence spans 469 residues: Gamma-aminobutyric acid permease (469 aa).

Over 1–17 (MNQSQSGLKKELKTRHM) the chain is Cytoplasmic. A helical membrane pass occupies residues 18–38 (TMISIAGVIGAGLFVGSGSVI). A topological domain (extracellular) is located at residue H39. A helical transmembrane segment spans residues 40–60 (STGPGAVVSYALAGLLVIFIM). The Cytoplasmic portion of the chain corresponds to 61-94 (RMLGEMSAVNPTSGSFSQYAHDAIGPWAGFTIGW). The chain crosses the membrane as a helical span at residues 95–115 (LYWFFWVIVIAIEAIAGAGII). Q116 is a topological domain (extracellular). A helical transmembrane segment spans residues 117–137 (YWFHDIPLWLTSLILTIVLTL). Over 138–157 (TNVYSVKSFGEFEYWFSLIK) the chain is Cytoplasmic. Residues 158-178 (VVTIIAFLIVGFAFIFGFAPG) form a helical membrane-spanning segment. The Extracellular portion of the chain corresponds to 179–200 (SEPVGFSNLTGKGGFFPEGISS). A helical transmembrane segment spans residues 201–221 (VLLGIVVVIFSFMGTEIVAIA). Over 222–242 (AGETSNPIESVTKATRSVVWR) the chain is Cytoplasmic. Residues 243–263 (IIVFYVGSIAIVVALLPWNSA) form a helical membrane-spanning segment. The Extracellular portion of the chain corresponds to 264–269 (NILESP). Residues 270–290 (FVAVLEHIGVPAAAQIMNFIV) traverse the membrane as a helical segment. The Cytoplasmic segment spans residues 291–328 (LTAVLSCLNSGLYTTSRMLYSLAERNEAPRRFMKLSKK). The chain crosses the membrane as a helical span at residues 329–349 (GVPVQAIVAGTFFSYIAVVMN). Topologically, residues 350–355 (YFSPDT) are extracellular. The helical transmembrane segment at 356-376 (VFLFLVNSSGAIALLVYLVIA) threads the bilayer. The Cytoplasmic portion of the chain corresponds to 377–401 (VSQLKMRKKLEKTNPEALKIKMWLF). The helical transmembrane segment at 402-422 (PFLTYLTIIAICGILVSMAFI) threads the bilayer. Topologically, residues 423 to 425 (DSM) are extracellular. A helical membrane pass occupies residues 426–446 (RDELLLTGVITGIVLISYLVF). At 447–469 (RKRKVSEKAAANPVTQQQPDILP) the chain is on the cytoplasmic side.

The protein belongs to the amino acid-polyamine-organocation (APC) superfamily. Amino acid transporter (AAT) (TC 2.A.3.1) family.

The protein resides in the cell membrane. The enzyme catalyses 4-aminobutanoate(in) + H(+)(in) = 4-aminobutanoate(out) + H(+)(out). It catalyses the reaction beta-alanine(in) + H(+)(in) = beta-alanine(out) + H(+)(out). It participates in amino-acid degradation; 4-aminobutanoate degradation. Functionally, transporter for gamma-aminobutyrate (GABA). Can also transport beta-alanine. Can translocate several open-chain GABA analogs (3-aminobutyrate, 3-aminopropanoate, cis-4-aminobutenoate) across the membrane via counterflow against GABA, but cannot transport muscimol. Also functions as a low-affinity proline importer. The chain is Gamma-aminobutyric acid permease from Bacillus subtilis (strain 168).